The following is a 262-amino-acid chain: Pyridoxine 5'-phosphate synthase (262 aa).

Asparagine 6 is a binding site for 3-amino-2-oxopropyl phosphate. 8–9 (DH) contributes to the 1-deoxy-D-xylulose 5-phosphate binding site. A 3-amino-2-oxopropyl phosphate-binding site is contributed by arginine 17. The active-site Proton acceptor is the histidine 41. Residues arginine 43 and histidine 48 each coordinate 1-deoxy-D-xylulose 5-phosphate. The Proton acceptor role is filled by glutamate 68. A 1-deoxy-D-xylulose 5-phosphate-binding site is contributed by threonine 98. Residue histidine 210 is the Proton donor of the active site. Residues glycine 211 and 232–233 (GQ) contribute to the 3-amino-2-oxopropyl phosphate site.

This sequence belongs to the PNP synthase family. Homooctamer; tetramer of dimers.

It is found in the cytoplasm. The enzyme catalyses 3-amino-2-oxopropyl phosphate + 1-deoxy-D-xylulose 5-phosphate = pyridoxine 5'-phosphate + phosphate + 2 H2O + H(+). It functions in the pathway cofactor biosynthesis; pyridoxine 5'-phosphate biosynthesis; pyridoxine 5'-phosphate from D-erythrose 4-phosphate: step 5/5. Its function is as follows. Catalyzes the complicated ring closure reaction between the two acyclic compounds 1-deoxy-D-xylulose-5-phosphate (DXP) and 3-amino-2-oxopropyl phosphate (1-amino-acetone-3-phosphate or AAP) to form pyridoxine 5'-phosphate (PNP) and inorganic phosphate. The chain is Pyridoxine 5'-phosphate synthase from Campylobacter jejuni subsp. jejuni serotype O:23/36 (strain 81-176).